Consider the following 653-residue polypeptide: Epithelial sodium channel subunit gamma (653 aa).

Over 1-54 (MGHGRRISESIKKQLPVTGPEAPTVKNLMDWYLNNTNTHGCRRIAVSRGYLRRW) the chain is Cytoplasmic. A helical membrane pass occupies residues 55-75 (IWICFTVSSVGMIFWQWTLLL). At 76-546 (MSYYTVSVSV…GGQLGLWMSC (471 aa)) the chain is on the extracellular side. Cystine bridges form between C100/C290, C214/C221, C267/C274, C379/C464, C401/C460, C405/C456, C414/C441, and C416/C430. Residues 547 to 567 (SIVCFLEMWEVFLVDILTIIA) traverse the membrane as a helical segment. Residues 568–653 (RYWLHRGRQW…DEQVSDTEVN (86 aa)) are Cytoplasmic-facing. The disordered stretch occupies residues 582 to 608 (KERQMQQPSPPDHDTGHHNPVCIDDED).

Belongs to the amiloride-sensitive sodium channel (TC 1.A.6) family. SCNN1G subfamily. Component of the heterotrimeric epithelial sodium channel (ENaC) composed of an alpha/SCNN1A, a beta/SCNN1B and a gamma/SCNN1G subunit. In terms of tissue distribution, strongly expressed in gill, liver, kidney and rectum and more weakly in heart, muscle and intestine.

It localises to the apical cell membrane. It catalyses the reaction Na(+)(in) = Na(+)(out). With respect to regulation, originally identified and characterized by its inhibition by the diuretic drug amiloride. Its function is as follows. This is one of the three pore-forming subunits of the heterotrimeric epithelial sodium channel (ENaC), a critical regulator of sodium balance and fluid homeostasis. ENaC operates in epithelial tissues, where it mediates the electrodiffusion of sodium ions from extracellular fluid through the apical membrane of cells, with water following osmotically. The polypeptide is Epithelial sodium channel subunit gamma (Neoceratodus forsteri (Australian lungfish)).